A 446-amino-acid chain; its full sequence is Adenylosuccinate synthetase (446 aa).

GTP contacts are provided by residues 12–18 and 40–42; these read GDEGKGK and GHT. Residue D13 is the Proton acceptor of the active site. Mg(2+)-binding residues include D13 and G40. Residues 13-16, 38-41, T128, R142, Q223, T238, and R302 contribute to the IMP site; these read DEGK and NAGH. Catalysis depends on H41, which acts as the Proton donor. Residue 298 to 304 participates in substrate binding; it reads TTTGRRR. GTP contacts are provided by residues R304, 330 to 332, and 412 to 414; these read KLD and SLG.

Belongs to the adenylosuccinate synthetase family. Homodimer. Mg(2+) is required as a cofactor.

It localises to the cytoplasm. It catalyses the reaction IMP + L-aspartate + GTP = N(6)-(1,2-dicarboxyethyl)-AMP + GDP + phosphate + 2 H(+). The protein operates within purine metabolism; AMP biosynthesis via de novo pathway; AMP from IMP: step 1/2. Plays an important role in the de novo pathway of purine nucleotide biosynthesis. Catalyzes the first committed step in the biosynthesis of AMP from IMP. The chain is Adenylosuccinate synthetase from Crocosphaera subtropica (strain ATCC 51142 / BH68) (Cyanothece sp. (strain ATCC 51142)).